We begin with the raw amino-acid sequence, 553 residues long: General alpha-glucoside permease (553 aa).

Residues 1–21 show a composition bias toward polar residues; the sequence is MSVDENQLENGQLLSSENEAS. Positions 1-26 are disordered; it reads MSVDENQLENGQLLSSENEASSPFKE. The Cytoplasmic segment spans residues 1–33; that stretch reads MSVDENQLENGQLLSSENEASSPFKESIPSRSS. A helical transmembrane segment spans residues 34-54; sequence LYLIALTVSLLGVQLTWSVEL. Topologically, residues 55-72 are extracellular; that stretch reads GYGTPYLFSLGLRKEWTS. Residues 73-93 form a helical membrane-spanning segment; that stretch reads IIWIAGPLTGILIQPIAGILS. At 94-111 the chain is on the cytoplasmic side; the sequence is DRVNSRIGRRRPFMLCAS. Residues 112–132 form a helical membrane-spanning segment; the sequence is LLGTFSLFLMGWAPDICLFIF. The Extracellular portion of the chain corresponds to 133 to 140; sequence SNEVLMKR. The helical transmembrane segment at 141 to 161 threads the bilayer; sequence VTIVLATISIYLLDVAVNVVM. At 162 to 186 the chain is on the cytoplasmic side; it reads ASTRSLIVDSVRSDQQHEANSWAGR. A helical membrane pass occupies residues 187–207; the sequence is MIGVGNVLGYLLGYLPLYRIF. Residues 208-216 lie on the Extracellular side of the membrane; that stretch reads SFLNFTQLQ. A helical membrane pass occupies residues 217–237; that stretch reads VFCVLASISLVLTVTITTIFV. The Cytoplasmic segment spans residues 238–280; the sequence is SERRFPPVEHEKSVAGEIFEFFTTMRQSITALPFTLKRICFVQ. A helical transmembrane segment spans residues 281 to 301; it reads FFAYFGWFPFLFYITTYVGIL. Topologically, residues 302–322 are extracellular; that stretch reads YLRHAPKGHEEDWDMATRQGS. Residues 323–343 traverse the membrane as a helical segment; the sequence is FALLLFAIISLAANTALPLLL. At 344–424 the chain is on the cytoplasmic side; sequence EDTEDDEEDE…SKVQIKGLTL (81 aa). Residues 368 to 399 form a disordered region; sequence NDLGNIRTGTNTPRLGNLSETTSFRSENEPSR. The span at 374-392 shows a compositional bias: polar residues; it reads RTGTNTPRLGNLSETTSFR. The chain crosses the membrane as a helical span at residues 425 to 445; that stretch reads PILWLSSHVLFGVCMLSTIFL. The Extracellular portion of the chain corresponds to 446-452; it reads QTSWQAQ. A helical transmembrane segment spans residues 453-473; that stretch reads AMVAICGLSWACTLWIPYSLF. Residues 474-494 lie on the Cytoplasmic side of the membrane; that stretch reads SSEIGKLGLRESSGKMIGVHN. The helical transmembrane segment at 495-515 threads the bilayer; it reads VFISAPQVLSTIIATIVFIQS. Over 516 to 521 the chain is Extracellular; the sequence is EGSHRD. The chain crosses the membrane as a helical span at residues 522–542; the sequence is IADNSIAWVLRIGGISAFLAA. The Cytoplasmic portion of the chain corresponds to 543–553; the sequence is YQCRHLLPINF.

The protein belongs to the glycoside-pentoside-hexuronide (GPH) cation symporter transporter (TC 2.A.2.4) family.

The protein localises to the membrane. Responsible for the transport of maltose and sucrose into the cell, with the concomitant uptake of protons (symport system). The sequence is that of General alpha-glucoside permease (sut1) from Schizosaccharomyces pombe (strain 972 / ATCC 24843) (Fission yeast).